A 358-amino-acid polypeptide reads, in one-letter code: Alanine racemase (358 aa).

Lys34 (proton acceptor; specific for D-alanine) is an active-site residue. Lys34 carries the N6-(pyridoxal phosphate)lysine modification. Arg130 serves as a coordination point for substrate. Residue Tyr254 is the Proton acceptor; specific for L-alanine of the active site. Met302 lines the substrate pocket.

Belongs to the alanine racemase family. Requires pyridoxal 5'-phosphate as cofactor.

The catalysed reaction is L-alanine = D-alanine. The protein operates within amino-acid biosynthesis; D-alanine biosynthesis; D-alanine from L-alanine: step 1/1. Functionally, catalyzes the interconversion of L-alanine and D-alanine. May also act on other amino acids. The chain is Alanine racemase (alr) from Stutzerimonas stutzeri (strain A1501) (Pseudomonas stutzeri).